A 404-amino-acid chain; its full sequence is Serine/threonine transporter SstT (404 aa).

The next 9 helical transmembrane spans lie at 17-37 (IGIG…VTAI), 39-59 (ILGQ…VFAL), 75-95 (MTLI…VAVI), 138-158 (ALAT…GLAL), 179-199 (IVVW…FSTV), 212-232 (LLIL…NPLL), 287-307 (IPLG…VLTL), 319-339 (FLTA…ASGV), and 354-374 (FGIS…VGVI).

Belongs to the dicarboxylate/amino acid:cation symporter (DAACS) (TC 2.A.23) family.

The protein resides in the cell membrane. The enzyme catalyses L-serine(in) + Na(+)(in) = L-serine(out) + Na(+)(out). It catalyses the reaction L-threonine(in) + Na(+)(in) = L-threonine(out) + Na(+)(out). Its function is as follows. Involved in the import of serine and threonine into the cell, with the concomitant import of sodium (symport system). This Streptococcus equi subsp. equi (strain 4047) protein is Serine/threonine transporter SstT.